A 145-amino-acid polypeptide reads, in one-letter code: Lysozyme-like protein 4 (145 aa).

The N-terminal stretch at methionine 1–threonine 19 is a signal peptide. Positions alanine 20–leucine 145 constitute a C-type lysozyme domain. 4 disulfide bridges follow: cysteine 25-cysteine 143, cysteine 49-cysteine 130, cysteine 84-cysteine 95, and cysteine 91-cysteine 109. The active site involves glutamate 54.

The protein belongs to the glycosyl hydrolase 22 family. In terms of assembly, monomer.

It localises to the secreted. The protein resides in the cytoplasmic vesicle. Its subcellular location is the secretory vesicle. It is found in the acrosome. The protein localises to the cell projection. It localises to the cilium. The protein resides in the flagellum. In terms of biological role, may be involved in fertilization. Has no detectable bacteriolytic and lysozyme activities in vitro. The polypeptide is Lysozyme-like protein 4 (LYZL4) (Bos taurus (Bovine)).